The chain runs to 558 residues: CTP synthase (558 aa).

The segment at 1 to 271 (MAARQQTKHL…DAYVVRRLGL (271 aa)) is amidoligase domain. Position 18 (Ser-18) interacts with CTP. UTP is bound at residue Ser-18. Residues 19 to 24 (SLGKGL) and Asp-76 contribute to the ATP site. 2 residues coordinate Mg(2+): Asp-76 and Glu-145. Residues 152-154 (DIE), 192-197 (KTKPTQ), and Lys-228 contribute to the CTP site. UTP contacts are provided by residues 192 to 197 (KTKPTQ) and Lys-228. Residues 296-545 (TIALVGKYVD…IRAALLHRCP (250 aa)) enclose the Glutamine amidotransferase type-1 domain. Gly-359 contributes to the L-glutamine binding site. The active-site Nucleophile; for glutamine hydrolysis is Cys-386. Residues 387–390 (LGLQ), Glu-410, and Arg-471 each bind L-glutamine. Catalysis depends on residues His-518 and Glu-520.

It belongs to the CTP synthase family. Homotetramer.

It catalyses the reaction UTP + L-glutamine + ATP + H2O = CTP + L-glutamate + ADP + phosphate + 2 H(+). The enzyme catalyses L-glutamine + H2O = L-glutamate + NH4(+). It carries out the reaction UTP + NH4(+) + ATP = CTP + ADP + phosphate + 2 H(+). It functions in the pathway pyrimidine metabolism; CTP biosynthesis via de novo pathway; CTP from UDP: step 2/2. With respect to regulation, allosterically activated by GTP, when glutamine is the substrate; GTP has no effect on the reaction when ammonia is the substrate. The allosteric effector GTP functions by stabilizing the protein conformation that binds the tetrahedral intermediate(s) formed during glutamine hydrolysis. Inhibited by the product CTP, via allosteric rather than competitive inhibition. Its function is as follows. Catalyzes the ATP-dependent amination of UTP to CTP with either L-glutamine or ammonia as the source of nitrogen. Regulates intracellular CTP levels through interactions with the four ribonucleotide triphosphates. In Acidothermus cellulolyticus (strain ATCC 43068 / DSM 8971 / 11B), this protein is CTP synthase.